The following is a 619-amino-acid chain: Chaperone protein HscA homolog (619 aa).

It belongs to the heat shock protein 70 family.

In terms of biological role, chaperone involved in the maturation of iron-sulfur cluster-containing proteins. Has a low intrinsic ATPase activity which is markedly stimulated by HscB. The chain is Chaperone protein HscA homolog from Shewanella frigidimarina (strain NCIMB 400).